Here is a 1151-residue protein sequence, read N- to C-terminus: Cation channel sperm-associated protein subunit gamma 1 (1151 aa).

An N-terminal signal peptide occupies residues 1-38; sequence MVSRPAMSPVSPVWPRKPNLWAFWVLRLVLLLSLKSWA. The Extracellular segment spans residues 39–1063; the sequence is EDTLQHCTWL…GLPLSSKRSS (1025 aa). An N-linked (GlcNAc...) asparagine glycan is attached at asparagine 356. Residues 1064–1084 form a helical membrane-spanning segment; that stretch reads FIVMVSTSFFIALVVFYILFC. Residues 1085 to 1151 are Cytoplasmic-facing; the sequence is LVWPHIVKAW…NVQAKRAKVA (67 aa). The span at 1113–1123 shows a compositional bias: low complexity; the sequence is SSSSGGFTLHS. The interval 1113-1151 is disordered; the sequence is SSSSGGFTLHSHSSEGSFEGPSRPGTKEDNVQAKRAKVA.

The protein belongs to the CATSPERG family.

The protein resides in the membrane. This chain is Cation channel sperm-associated protein subunit gamma 1 (Catsperg1), found in Mus musculus (Mouse).